The primary structure comprises 968 residues: RNA polymerase-associated protein RapA (968 aa).

The 171-residue stretch at 164 to 334 (DVGRRHAPRV…FARLRLLDPN (171 aa)) folds into the Helicase ATP-binding domain. 177–184 (DEVGLGKT) lines the ATP pocket. Positions 280 to 283 (DEAH) match the DEAH box motif. Residues 490-662 (RVEWLMGYLT…YLASPVQTEG (173 aa)) enclose the Helicase C-terminal domain.

Belongs to the SNF2/RAD54 helicase family. RapA subfamily. As to quaternary structure, interacts with the RNAP. Has a higher affinity for the core RNAP than for the holoenzyme. Its ATPase activity is stimulated by binding to RNAP.

Its function is as follows. Transcription regulator that activates transcription by stimulating RNA polymerase (RNAP) recycling in case of stress conditions such as supercoiled DNA or high salt concentrations. Probably acts by releasing the RNAP, when it is trapped or immobilized on tightly supercoiled DNA. Does not activate transcription on linear DNA. Probably not involved in DNA repair. This Shigella sonnei (strain Ss046) protein is RNA polymerase-associated protein RapA.